We begin with the raw amino-acid sequence, 373 residues long: Zn(2)-C6 fungal-type transcription factor afumD (373 aa).

The tract at residues 1 to 48 is disordered; that stretch reads MLDRSKMTSAIPDSNSSSSPRGHNQSERDSYNRKKRKGPRLAHRKSRT. A compositionally biased stretch (basic residues) spans 33–48; the sequence is RKKRKGPRLAHRKSRT. Positions 50-77 form a DNA-binding region, zn(2)-C6 fungal-type; that stretch reads CQRCRARRVKCDESRPVCRDCHRHGIPC. The interval 86–110 is disordered; that stretch reads GAIPPSTGIQSRPLEPSPSDPSNDA.

It is found in the nucleus. Functionally, zn(2)-C6 fungal-type transcription factor; part of the gene cluster that mediates the biosynthesis fumihopaside A, a hopane-type glucoside that enhances the thermotolerance and UV resistance of N.fumigata. The sequence is that of Zn(2)-C6 fungal-type transcription factor afumD from Aspergillus fumigatus (strain CBS 144.89 / FGSC A1163 / CEA10) (Neosartorya fumigata).